The following is a 152-amino-acid chain: NADH-ubiquinone oxidoreductase chain 4 (152 aa).

4 helical membrane-spanning segments follow: residues 2 to 22, 43 to 63, 84 to 104, and 128 to 148; these read FSGATTLMIAHGLTSSMYFCL, ILLPLTAFWWLTASLTNLALP, ITIVLTGLNMLITALYSLHMF, and MLMFMHLAPIILLSLNPNIIL.

It belongs to the complex I subunit 4 family.

It localises to the mitochondrion membrane. It carries out the reaction a ubiquinone + NADH + 5 H(+)(in) = a ubiquinol + NAD(+) + 4 H(+)(out). Core subunit of the mitochondrial membrane respiratory chain NADH dehydrogenase (Complex I) that is believed to belong to the minimal assembly required for catalysis. Complex I functions in the transfer of electrons from NADH to the respiratory chain. The immediate electron acceptor for the enzyme is believed to be ubiquinone. This chain is NADH-ubiquinone oxidoreductase chain 4 (MT-ND4), found in Macaca fascicularis (Crab-eating macaque).